Here is a 269-residue protein sequence, read N- to C-terminus: Integral membrane protein 2C (269 aa).

Thr-39 is modified (phosphothreonine). Residues 57 to 77 (VGGVCYLSMGMVVLLMGLVFA) form a helical; Signal-anchor for type II membrane protein membrane-spanning segment. Positions 138 to 232 (FGGGDPADII…LCNGKDTYRL (95 aa)) constitute a BRICHOS domain. Cysteines 165 and 224 form a disulfide. A glycan (N-linked (GlcNAc...) asparagine) is linked at Asn-171.

It belongs to the ITM2 family. As to quaternary structure, interacts with BACE1. Interacts with APP. Interacts with STMN2. Type I membrane-bound, as well as soluble, furin has a pre-eminent role in ITM2C proteolytic processing. PCSK7 and PCSK5 may also be involved although to a lesser extent. The soluble form of PCSK7 is incapable of processing ITM2C. Fails to undergo shedding by ADAM10 and intramembrane cleavage by SPPL2B.

Its subcellular location is the lysosome membrane. It is found in the cell membrane. Functionally, negative regulator of amyloid-beta peptide production. May inhibit the processing of APP by blocking its access to alpha- and beta-secretase. Binding to the beta-secretase-cleaved APP C-terminal fragment is negligible, suggesting that ITM2C is a poor gamma-secretase cleavage inhibitor. May play a role in TNF-induced cell death and neuronal differentiation. This chain is Integral membrane protein 2C (Itm2c), found in Mus musculus (Mouse).